The chain runs to 451 residues: Subtilase-type proteinase psp3 (451 aa).

The N-terminal stretch at 1-20 (MRVSWISGLLLVAHLAPSSA) is a signal peptide. One can recognise an Inhibitor I9 domain in the interval 80-161 (YIVMFKPSVD…LVEPDRVMHV (82 aa)). Residues 169–451 (PWGLARVSHR…PNVLAFNNYE (283 aa)) enclose the Peptidase S8 domain. Active-site charge relay system residues include Asp205, His237, and Ser394.

This sequence belongs to the peptidase S8 family.

The polypeptide is Subtilase-type proteinase psp3 (psp3) (Schizosaccharomyces pombe (strain 972 / ATCC 24843) (Fission yeast)).